The sequence spans 569 residues: Membrane protein insertase YidC (569 aa).

8 helical membrane-spanning segments follow: residues 7-24, 219-239, 299-319, 340-360, 366-386, 436-456, 485-505, and 526-546; these read VLWV…DNYN, GSAL…PAIY, LYAV…TASM, FELV…FWLM, ILGN…LAFF, IGGC…YWVL, IGTF…SMFI, and PIAF…YWVV.

This sequence belongs to the OXA1/ALB3/YidC family. Type 1 subfamily. As to quaternary structure, interacts with the Sec translocase complex via SecD. Specifically interacts with transmembrane segments of nascent integral membrane proteins during membrane integration.

The protein localises to the cell inner membrane. Required for the insertion and/or proper folding and/or complex formation of integral membrane proteins into the membrane. Involved in integration of membrane proteins that insert both dependently and independently of the Sec translocase complex, as well as at least some lipoproteins. Aids folding of multispanning membrane proteins. The sequence is that of Membrane protein insertase YidC from Herminiimonas arsenicoxydans.